A 474-amino-acid polypeptide reads, in one-letter code: Receptor-transporting protein 3 (474 aa).

At 1–453 (MMEEDIGDTE…SCCEAACNCM (453 aa)) the chain is on the cytoplasmic side. The segment at 53–164 (TFARFHCPSC…SSNCEACLLG (112 aa)) adopts a 3CxxC-type zinc-finger fold. The tract at residues 175 to 304 (SKPPAPPLSP…ISCTSKPSTT (130 aa)) is disordered. 2 stretches are compositionally biased toward polar residues: residues 197 to 228 (VTCS…NPTK) and 259 to 304 (VTCS…PSTT). Residues 454–474 (SQSPLCCLAFLILFLLLWYLL) traverse the membrane as a helical segment.

It belongs to the TMEM7 family. As to quaternary structure, interacts with TAS2R16. Expressed predominantly in the liver. Not detected in the olfactory epithelium.

Its subcellular location is the membrane. Its function is as follows. Promotes functional cell surface expression of the bitter taste receptors TAS2R16 and TAS2R43. The protein is Receptor-transporting protein 3 (Rtp3) of Mus musculus (Mouse).